A 930-amino-acid polypeptide reads, in one-letter code: Transcription initiation factor TFIID subunit 3 (930 aa).

6 disordered regions span residues 128–151, 175–381, 404–507, 519–578, 599–755, and 782–820; these read MPPIVSSQEEEEEEQVPTDGGTSA, YLSK…KKLP, PDPF…PEPL, SSVE…QWKE, DTKV…PAPS, and EAKPATPVSRPKTPPPVPSPVPAPVHVTPPPAPVPAPPQ. Positions 274-291 are enriched in low complexity; it reads KTSSPGQKTKSPKTTPSP. Residues 428–446 are compositionally biased toward polar residues; the sequence is VSETTATTPKPSVSTNCSN. Positions 448 to 462 are enriched in low complexity; the sequence is AGATPVPPSGGTSSS. A compositionally biased stretch (polar residues) spans 482-494; the sequence is GTPSNPPANFTYF. Residues 525–539 show a composition bias toward basic residues; that stretch reads KKLKKELKTKMKKKE. Composition is skewed to basic and acidic residues over residues 540-578, 599-612, and 621-648; these read KQKEKDKEKSKEKNKEKEKNKEKDKDKEGNKEAKFQWKE, DTKVKLKDGNTKKE, and KEKEKGKKDKDKKDKEKVKDKSKEDKIK. The span at 674–686 shows a compositional bias: low complexity; that stretch reads LPSMLPSLSPMLP. A compositionally biased stretch (basic and acidic residues) spans 688-699; the sequence is KLFEDKEKPKEK. Residues 700-711 are compositionally biased toward basic residues; sequence KKDKKEKKKKKE. Residues 712 to 737 show a composition bias toward basic and acidic residues; sequence REKDKEKEKKDKEKERKEREKKEKEK. Over residues 793–820 the composition is skewed to pro residues; it reads KTPPPVPSPVPAPVHVTPPPAPVPAPPQ. The segment at 866–916 adopts a PHD-type zinc-finger fold; the sequence is IWFCPGCNKPDDGSPMIGCDDCDDWYHWPCVGITAAPPEEMQWFCSKCANK.

Belongs to the TAF3 family. Component of the TFIID basal transcription factor complex, composed of TATA-box-binding protein TBP, and a number of TBP-associated factors (TAFs), including TAF1, TAF2, TAF3, TAF4, TAF5, TAF6, TAF7, TAF8, TAF9, TAF10, TAF11, TAF12 and TAF13. Interacts with TAF10 via the histone fold. Interacts with TAF13, TBP, SAP130 and GCN5L2. Interacts with TBPL2.

The protein localises to the nucleus. Functionally, the TFIID basal transcription factor complex plays a major role in the initiation of RNA polymerase II (Pol II)-dependent transcription. TFIID recognizes and binds promoters with or without a TATA box via its subunit TBP, a TATA-box-binding protein, and promotes assembly of the pre-initiation complex (PIC). The TFIID complex consists of TBP and TBP-associated factors (TAFs), including TAF1, TAF2, TAF3, TAF4, TAF5, TAF6, TAF7, TAF8, TAF9, TAF10, TAF11, TAF12 and TAF13. The TFIID complex structure can be divided into 3 modules TFIID-A, TFIID-B, and TFIID-C. TAF3 forms the TFIID-A module together with TAF5 and TBP. Required in complex with TBPL2 for the differentiation of myoblasts into myocytes. The TAF3-TBPL2 complex replaces TFIID at specific promoters at an early stage in the differentiation process. In Gallus gallus (Chicken), this protein is Transcription initiation factor TFIID subunit 3 (TAF3).